The sequence spans 1334 residues: SCAR-like protein 2 (1334 aa).

A compositionally biased stretch (basic and acidic residues) spans 197–207 (KTGNFQREKKS). Disordered regions lie at residues 197–281 (KTGN…SSFS), 294–331 (DTKP…GTSA), 481–516 (PDSS…ADAP), 568–602 (PNQS…SSYT), 643–668 (DKPT…TVES), 791–832 (STSH…KNII), 931–956 (FEKK…YSEK), 1000–1026 (FQLL…GRSY), 1248–1268 (SGQQ…DTKN), and 1280–1304 (RSKT…TANS). Residues 241–256 (VQLTSRHFATPSTDGR) show a composition bias toward polar residues. Residues 310-319 (SNNNLHKLSN) show a composition bias toward low complexity. The segment covering 320–330 (TPLHTRLNGTS) has biased composition (polar residues). Basic and acidic residues predominate over residues 574-595 (DSKEIPDSKAEDAPIDSPEKLE). Positions 791–823 (STSHSSETNQSTVRTPDTVIGQTEGSTGCSTSF) are enriched in polar residues. A compositionally biased stretch (low complexity) spans 945–956 (SSLFSSSHYSEK). Over residues 1248 to 1260 (SGQQKLNGHEKSK) the composition is skewed to basic and acidic residues. The WH2 domain maps to 1271–1289 (EREELLQQIRSKTFNLRRT). The span at 1289–1304 (TNASKTNTSSPTTANS) shows a compositional bias: low complexity.

This sequence belongs to the SCAR/WAVE family.

It is found in the cytoplasm. The protein resides in the cytoskeleton. Involved in regulation of actin and microtubule organization. Part of a WAVE complex that activates the Arp2/3 complex. The protein is SCAR-like protein 2 of Oryza sativa subsp. japonica (Rice).